Consider the following 187-residue polypeptide: GTP cyclohydrolase 1 (187 aa).

The Zn(2+) site is built by Cys76, His79, and Cys148.

Belongs to the GTP cyclohydrolase I family. Toroid-shaped homodecamer, composed of two pentamers of five dimers.

It catalyses the reaction GTP + H2O = 7,8-dihydroneopterin 3'-triphosphate + formate + H(+). Its pathway is cofactor biosynthesis; 7,8-dihydroneopterin triphosphate biosynthesis; 7,8-dihydroneopterin triphosphate from GTP: step 1/1. The chain is GTP cyclohydrolase 1 from Acetivibrio thermocellus (strain ATCC 27405 / DSM 1237 / JCM 9322 / NBRC 103400 / NCIMB 10682 / NRRL B-4536 / VPI 7372) (Clostridium thermocellum).